We begin with the raw amino-acid sequence, 56 residues long: Small ribosomal subunit protein uS14 (56 aa).

The residue at position 9 (Ser9) is a Phosphoserine. The residue at position 12 (Arg12) is an Omega-N-methylarginine. Residues Cys21, Cys24, Cys39, and Cys42 each coordinate Zn(2+). At Lys48 the chain carries N6-acetyllysine.

This sequence belongs to the universal ribosomal protein uS14 family. In terms of assembly, component of the 40S small ribosomal subunit. Zn(2+) is required as a cofactor.

It is found in the cytoplasm. The protein resides in the cytosol. The protein localises to the rough endoplasmic reticulum. In terms of biological role, component of the small ribosomal subunit. The ribosome is a large ribonucleoprotein complex responsible for the synthesis of proteins in the cell. The polypeptide is Small ribosomal subunit protein uS14 (RPS29) (Sus scrofa (Pig)).